Reading from the N-terminus, the 1194-residue chain is Peroxisomal ATPase PEX1 (1194 aa).

The interval 220–255 is disordered; sequence KTRQRRMSHQGKSVKAKSLASTRHGKRRDDGSGPSG. The span at 221-234 shows a compositional bias: basic residues; it reads TRQRRMSHQGKSVK. Positions 538–730 are AAA-cassette D1; sequence RSASVLLTGA…GPEPTLKIEK (193 aa). ATP-binding positions include 546–553 and 849–856; these read GARGSGKT and GYPGCGKT. The interval 844-1028 is AAA-cassette D2; it reads GLLLYGYPGC…LYNAHLEAIH (185 aa). Disordered stretches follow at residues 1062 to 1084, 1116 to 1139, and 1174 to 1194; these read YISF…LTNG, QVQQ…EPVI, and RSGE…SSLM. Polar residues predominate over residues 1066 to 1084; the sequence is SMGNKDSTGEPSTQPLTNG. Positions 1116-1127 are enriched in low complexity; that stretch reads QVQQQQSQTNQA.

The protein belongs to the AAA ATPase family. As to quaternary structure, interacts with PEX6; forming the PEX1-PEX6 AAA ATPase complex, which is composed of a heterohexamer formed by a trimer of PEX1-PEX6 dimers.

It is found in the cytoplasm. Its subcellular location is the cytosol. It localises to the peroxisome membrane. The catalysed reaction is ATP + H2O = ADP + phosphate + H(+). Functionally, component of the PEX1-PEX6 AAA ATPase complex, a protein dislocase complex that mediates the ATP-dependent extraction of the PEX5 receptor from peroxisomal membranes, an essential step for PEX5 recycling. Specifically recognizes PEX5 monoubiquitinated at 'Cys-6', and pulls it out of the peroxisome lumen through the PEX2-PEX10-PEX12 retrotranslocation channel. Extraction by the PEX1-PEX6 AAA ATPase complex is accompanied by unfolding of the TPR repeats and release of bound cargo from PEX5. Regulates autophagy and biogenesis of peroxisomes and Woronin bodies. Plays important roles in mycelial growth and development and stress response. Is also essential for conidiation and fatty acid utilization. Required for nematode predation via trap formation. This is Peroxisomal ATPase PEX1 from Arthrobotrys oligospora (strain ATCC 24927 / CBS 115.81 / DSM 1491) (Nematode-trapping fungus).